A 458-amino-acid chain; its full sequence is Argininosuccinate lyase (458 aa).

Belongs to the lyase 1 family. Argininosuccinate lyase subfamily.

Its subcellular location is the cytoplasm. It carries out the reaction 2-(N(omega)-L-arginino)succinate = fumarate + L-arginine. It functions in the pathway amino-acid biosynthesis; L-arginine biosynthesis; L-arginine from L-ornithine and carbamoyl phosphate: step 3/3. In Salmonella paratyphi A (strain ATCC 9150 / SARB42), this protein is Argininosuccinate lyase.